We begin with the raw amino-acid sequence, 473 residues long: P3 protein (473 aa).

9 helical membrane-spanning segments follow: residues 25-45 (FVGMLGTALLFISLPWGAQVM), 221-241 (PMLLGLLGQFLVMPFYAFLMA), 249-269 (ALALGLIITCSSPGGGGSYLF), 277-297 (VTLAISMTFISTVAATGFLPL), 316-336 (ISKILGTLLFIAIPIAAGVVI), 356-376 (FILLLGGLFLAYHMGVFILVG), 381-401 (IVLVGFTVPLVGLLVGYSLAI), 413-433 (VSIEVGVQNSLLALAMLQLSL), and 446-466 (FIVALSGTSEMLALVIGQFIY).

Belongs to the bile acid:sodium symporter (BASS) (TC 2.A.28) family.

The protein resides in the membrane. Its function is as follows. The ubiquitous expression and the conservation of the sequence in distant animal species suggest that the gene codes for a protein with housekeeping functions. The sequence is that of P3 protein (Slc10a3) from Mus musculus (Mouse).